Here is a 207-residue protein sequence, read N- to C-terminus: Ras-related protein Rab7A (207 aa).

GTP contacts are provided by residues 15–22 (GDSGVGKT), 63–67 (DTAGQ), and 125–128 (NKID). S-geranylgeranyl cysteine attachment occurs at residues Cys-205 and Cys-207. Cys-207 bears the Cysteine methyl ester mark.

This sequence belongs to the small GTPase superfamily. Rab family.

Its subcellular location is the cell membrane. In terms of biological role, protein transport. Probably involved in vesicular traffic. The sequence is that of Ras-related protein Rab7A from Mesembryanthemum crystallinum (Common ice plant).